The following is a 374-amino-acid chain: Chaperone protein DnaJ (374 aa).

The 66-residue stretch at 4 to 69 (SYYEILEITQ…EKRAIYDRYG (66 aa)) folds into the J domain. The CR-type zinc-finger motif lies at 136-213 (GCKKNIDFTY…CKGLGYNESK (78 aa)). Positions 149, 152, 165, 168, 187, 190, 201, and 204 each coordinate Zn(2+). CXXCXGXG motif repeat units lie at residues 149 to 156 (CKTCNGTG), 165 to 172 (CPKCQGRG), 187 to 194 (CPDCQGSG), and 201 to 208 (CSDCKGLG).

This sequence belongs to the DnaJ family. As to quaternary structure, homodimer. Zn(2+) is required as a cofactor.

The protein localises to the cytoplasm. In terms of biological role, participates actively in the response to hyperosmotic and heat shock by preventing the aggregation of stress-denatured proteins and by disaggregating proteins, also in an autonomous, DnaK-independent fashion. Unfolded proteins bind initially to DnaJ; upon interaction with the DnaJ-bound protein, DnaK hydrolyzes its bound ATP, resulting in the formation of a stable complex. GrpE releases ADP from DnaK; ATP binding to DnaK triggers the release of the substrate protein, thus completing the reaction cycle. Several rounds of ATP-dependent interactions between DnaJ, DnaK and GrpE are required for fully efficient folding. Also involved, together with DnaK and GrpE, in the DNA replication of plasmids through activation of initiation proteins. The chain is Chaperone protein DnaJ from Campylobacter jejuni subsp. jejuni serotype O:6 (strain 81116 / NCTC 11828).